Consider the following 294-residue polypeptide: Cyclin-dependent kinase A-1 (294 aa).

The Protein kinase domain occupies 4-287; the sequence is YEKEEKIGEG…ARQALEHEYF (284 aa). Residues 10-18 and K33 each bind ATP; that span reads IGEGTYGVV. T14 bears the Phosphothreonine mark. A Phosphotyrosine modification is found at Y15. Residue D127 is the Proton acceptor of the active site. Residue T161 is modified to Phosphothreonine; by CAK.

This sequence belongs to the protein kinase superfamily. CMGC Ser/Thr protein kinase family. CDC2/CDKX subfamily. Post-translationally, phosphorylated at Thr-161 by CDKD-1. Expressed in the dividing region of the root apex and in differentiated cells such as those in the sclerenchyma, pericycle and parenchyma of the central cylinder.

The enzyme catalyses L-seryl-[protein] + ATP = O-phospho-L-seryl-[protein] + ADP + H(+). It carries out the reaction L-threonyl-[protein] + ATP = O-phospho-L-threonyl-[protein] + ADP + H(+). The catalysed reaction is [DNA-directed RNA polymerase] + ATP = phospho-[DNA-directed RNA polymerase] + ADP + H(+). This is Cyclin-dependent kinase A-1 (CDKA-1) from Oryza sativa subsp. japonica (Rice).